The following is a 256-amino-acid chain: MLAKRIIPCLDVDNGRVVKGVQFVDIKDAGDPVEVARRYNEQGADEITFLDITATHHGRETTYDMVERIAETVFVPLTVGGGVRKIEDIRNLLNAGADKVAINSAAVFTPEFVAEAAAKFGSQCIVVAIDAKQVEDVEGQPRWEIFTHGGRKPTGLDAVAWAVKMAELGAGELLVTSMDGDGTKKGYDLALMKAITSAVNVPVIASGGVGNLQHLADGVLEGGADAVLAASIFHFGEYSIAEAKQFMAKQGIEMRL.

Catalysis depends on residues Asp11 and Asp130.

It belongs to the HisA/HisF family. Heterodimer of HisH and HisF.

The protein localises to the cytoplasm. It catalyses the reaction 5-[(5-phospho-1-deoxy-D-ribulos-1-ylimino)methylamino]-1-(5-phospho-beta-D-ribosyl)imidazole-4-carboxamide + L-glutamine = D-erythro-1-(imidazol-4-yl)glycerol 3-phosphate + 5-amino-1-(5-phospho-beta-D-ribosyl)imidazole-4-carboxamide + L-glutamate + H(+). Its pathway is amino-acid biosynthesis; L-histidine biosynthesis; L-histidine from 5-phospho-alpha-D-ribose 1-diphosphate: step 5/9. In terms of biological role, IGPS catalyzes the conversion of PRFAR and glutamine to IGP, AICAR and glutamate. The HisF subunit catalyzes the cyclization activity that produces IGP and AICAR from PRFAR using the ammonia provided by the HisH subunit. This chain is Imidazole glycerol phosphate synthase subunit HisF, found in Psychrobacter sp. (strain PRwf-1).